Reading from the N-terminus, the 429-residue chain is Glutamate-1-semialdehyde 2,1-aminomutase 2 (429 aa).

At K268 the chain carries N6-(pyridoxal phosphate)lysine.

Belongs to the class-III pyridoxal-phosphate-dependent aminotransferase family. HemL subfamily. In terms of assembly, homodimer. Pyridoxal 5'-phosphate is required as a cofactor.

The protein localises to the cytoplasm. It catalyses the reaction (S)-4-amino-5-oxopentanoate = 5-aminolevulinate. The protein operates within porphyrin-containing compound metabolism; protoporphyrin-IX biosynthesis; 5-aminolevulinate from L-glutamyl-tRNA(Glu): step 2/2. The sequence is that of Glutamate-1-semialdehyde 2,1-aminomutase 2 from Staphylococcus aureus (strain USA300).